We begin with the raw amino-acid sequence, 556 residues long: 2-isopropylmalate synthase (556 aa).

Residues 33–307 (PIWLSSDLRD…DPQLDFSDID (275 aa)) enclose the Pyruvate carboxyltransferase domain. The Mg(2+) site is built by Asp-42, His-246, His-248, and Asn-282. The segment at 439–556 (ATAPYTLKGH…ALHQAQEAAA (118 aa)) is regulatory domain.

The protein belongs to the alpha-IPM synthase/homocitrate synthase family. LeuA type 2 subfamily. In terms of assembly, homodimer. Mg(2+) serves as cofactor.

It is found in the cytoplasm. The enzyme catalyses 3-methyl-2-oxobutanoate + acetyl-CoA + H2O = (2S)-2-isopropylmalate + CoA + H(+). Its pathway is amino-acid biosynthesis; L-leucine biosynthesis; L-leucine from 3-methyl-2-oxobutanoate: step 1/4. Its function is as follows. Catalyzes the condensation of the acetyl group of acetyl-CoA with 3-methyl-2-oxobutanoate (2-ketoisovalerate) to form 3-carboxy-3-hydroxy-4-methylpentanoate (2-isopropylmalate). The sequence is that of 2-isopropylmalate synthase from Stutzerimonas stutzeri (strain A1501) (Pseudomonas stutzeri).